The sequence spans 548 residues: Lysine--tRNA ligase (548 aa).

A 'HIGH' region motif is present at residues 43 to 51 (PSGVPHLGN). Positions 308-312 (PFSSS) match the 'KMSKS' region motif.

Belongs to the class-I aminoacyl-tRNA synthetase family.

The protein resides in the cytoplasm. The enzyme catalyses tRNA(Lys) + L-lysine + ATP = L-lysyl-tRNA(Lys) + AMP + diphosphate. The protein is Lysine--tRNA ligase of Halobacterium salinarum (strain ATCC 700922 / JCM 11081 / NRC-1) (Halobacterium halobium).